We begin with the raw amino-acid sequence, 98 residues long: NADH-ubiquinone oxidoreductase chain 4L (98 aa).

The next 3 helical transmembrane spans lie at 2–22 (PSIF…MLIF), 37–57 (MLSM…TMSF), and 61–81 (ILLL…LVTV).

It belongs to the complex I subunit 4L family. As to quaternary structure, core subunit of respiratory chain NADH dehydrogenase (Complex I) which is composed of 45 different subunits.

It localises to the mitochondrion inner membrane. It carries out the reaction a ubiquinone + NADH + 5 H(+)(in) = a ubiquinol + NAD(+) + 4 H(+)(out). Functionally, core subunit of the mitochondrial membrane respiratory chain NADH dehydrogenase (Complex I) which catalyzes electron transfer from NADH through the respiratory chain, using ubiquinone as an electron acceptor. Part of the enzyme membrane arm which is embedded in the lipid bilayer and involved in proton translocation. This Varecia rubra (Red ruffed lemur) protein is NADH-ubiquinone oxidoreductase chain 4L (MT-ND4L).